Here is a 72-residue protein sequence, read N- to C-terminus: Translation initiation factor IF-1 (72 aa).

One can recognise an S1-like domain in the interval 1–72; the sequence is MAKEGAIEVE…TRGRIVYRYK (72 aa).

It belongs to the IF-1 family. As to quaternary structure, component of the 30S ribosomal translation pre-initiation complex which assembles on the 30S ribosome in the order IF-2 and IF-3, IF-1 and N-formylmethionyl-tRNA(fMet); mRNA recruitment can occur at any time during PIC assembly.

It is found in the cytoplasm. In terms of biological role, one of the essential components for the initiation of protein synthesis. Stabilizes the binding of IF-2 and IF-3 on the 30S subunit to which N-formylmethionyl-tRNA(fMet) subsequently binds. Helps modulate mRNA selection, yielding the 30S pre-initiation complex (PIC). Upon addition of the 50S ribosomal subunit IF-1, IF-2 and IF-3 are released leaving the mature 70S translation initiation complex. This is Translation initiation factor IF-1 from Corynebacterium efficiens (strain DSM 44549 / YS-314 / AJ 12310 / JCM 11189 / NBRC 100395).